A 395-amino-acid polypeptide reads, in one-letter code: F-box/kelch-repeat protein SKIP25 (395 aa).

The segment at 1–29 (MEKKLKRRESMSTTAAESPPAKRRRTVTG) is disordered. In terms of domain architecture, F-box spans 34–79 (ALIEGLPDHISEICLSLVHRPSLLSAVCTRWRRLLYSPEFPSFPSL). Kelch repeat units lie at residues 81–129 (ALFV…YRHP), 147–194 (LILI…ACDG), 196–245 (IYIA…FSRE), 246–299 (AIDA…AMEE), and 301–342 (ILYS…TQVT).

As to quaternary structure, part of a SCF (ASK-cullin-F-box) protein ligase complex. Interacts with SKP1A/ASK1.

It localises to the nucleus. The protein operates within protein modification; protein ubiquitination. Component of SCF(ASK-cullin-F-box) E3 ubiquitin ligase complexes, which may mediate the ubiquitination and subsequent proteasomal degradation of target proteins. This Arabidopsis thaliana (Mouse-ear cress) protein is F-box/kelch-repeat protein SKIP25 (SKIP25).